A 549-amino-acid chain; its full sequence is Arginine-containing cyclodipeptide synthase amaA (549 aa).

The Conserved DDXXE motif motif lies at 445-449 (DDRAE).

Belongs to the arginine-containing cyclodipeptide synthase family.

The enzyme catalyses L-prolyl-tRNA(Pro) + L-arginyl-tRNA(Arg) = cyclo(L-arginyl-L-prolyl) + tRNA(Pro) + tRNA(Arg) + 2 H(+). It functions in the pathway secondary metabolite biosynthesis. Arginine-containing cyclodipeptide synthase; part of the cluster that mediates the biosynthesis of a highly modified cyclo-arginine-proline dipeptide (cRP). Within the pathway, amaA acts as the scaffold-generating enzyme and is responsible for formation of the cyclo-Arg-Pro diketopiperazine (cRW) from L-arginyl-tRNA(Arg) + L-prolyl-tRNA(Pro). Additional enzymes from the cluster then further modify the cyclo-Arg-Pro diketopiperazine (cRW) scaffold. The sequence is that of Arginine-containing cyclodipeptide synthase amaA from Apiospora montagnei (Sphaeria apiospora).